The chain runs to 966 residues: Translation initiation factor IF-2 (966 aa).

5 stretches are compositionally biased toward basic and acidic residues: residues 99 to 113, 123 to 183, 197 to 212, 220 to 249, and 266 to 277; these read KRDE…EAAD, EQAR…KAEE, DASR…RVAV, AADD…EAEA, and PSERKAEEKKAE. Residues 99–382 form a disordered region; the sequence is KRDEAGADQH…NFQAPTEPVV (284 aa). The segment covering 304-315 has biased composition (low complexity); sequence AATTTTTTATTT. The span at 346–359 shows a compositional bias: gly residues; the sequence is SSGGVGGWRGGPRG. One can recognise a tr-type G domain in the interval 466-635; it reads PRPPVVTVMG…LLQAEVLELK (170 aa). The interval 475 to 482 is G1; sequence GHVDHGKT. 475-482 is a GTP binding site; that stretch reads GHVDHGKT. The G2 stretch occupies residues 500–504; sequence GITQH. A G3 region spans residues 521–524; sequence DTPG. GTP is bound by residues 521-525 and 575-578; these read DTPGH and NKID. Residues 575 to 578 form a G4 region; that stretch reads NKID. The interval 611 to 613 is G5; sequence SAK.

Belongs to the TRAFAC class translation factor GTPase superfamily. Classic translation factor GTPase family. IF-2 subfamily.

Its subcellular location is the cytoplasm. One of the essential components for the initiation of protein synthesis. Protects formylmethionyl-tRNA from spontaneous hydrolysis and promotes its binding to the 30S ribosomal subunits. Also involved in the hydrolysis of GTP during the formation of the 70S ribosomal complex. This Cupriavidus pinatubonensis (strain JMP 134 / LMG 1197) (Cupriavidus necator (strain JMP 134)) protein is Translation initiation factor IF-2.